We begin with the raw amino-acid sequence, 379 residues long: Anhydro-N-acetylmuramic acid kinase (379 aa).

9-16 is an ATP binding site; it reads GTSADGVD.

Belongs to the anhydro-N-acetylmuramic acid kinase family.

It carries out the reaction 1,6-anhydro-N-acetyl-beta-muramate + ATP + H2O = N-acetyl-D-muramate 6-phosphate + ADP + H(+). Its pathway is amino-sugar metabolism; 1,6-anhydro-N-acetylmuramate degradation. It participates in cell wall biogenesis; peptidoglycan recycling. Functionally, catalyzes the specific phosphorylation of 1,6-anhydro-N-acetylmuramic acid (anhMurNAc) with the simultaneous cleavage of the 1,6-anhydro ring, generating MurNAc-6-P. Is required for the utilization of anhMurNAc either imported from the medium or derived from its own cell wall murein, and thus plays a role in cell wall recycling. The protein is Anhydro-N-acetylmuramic acid kinase of Prochlorococcus marinus (strain MIT 9211).